Reading from the N-terminus, the 713-residue chain is Denticleless protein homolog (713 aa).

WD repeat units follow at residues glycine 47–leucine 89, alanine 96–glutamate 135, and glycine 138–phenylalanine 178. Positions tryptophan 168–arginine 171 match the DDB1-binding motif motif. The Nuclear localization signal motif lies at proline 197–lysine 204. 4 WD repeats span residues aspartate 215–arginine 254, threonine 270–valine 309, glycine 314–valine 355, and glycine 359–alanine 399. The short motif at tryptophan 244 to arginine 247 is the DDB1-binding motif element. Disordered stretches follow at residues threonine 474–alanine 544, glycine 604–valine 623, and serine 635–serine 700. Composition is skewed to polar residues over residues threonine 504 to proline 516 and glycine 612 to valine 623. Positions serine 635 to serine 644 are enriched in basic and acidic residues. A compositionally biased stretch (polar residues) spans asparagine 686–glycine 699.

It belongs to the WD repeat cdt2 family. As to quaternary structure, component of the DCX(DTL) E3 ubiquitin ligase complex, at least composed of cul4 (cul4a or cul4b), ddb1, dtl/cdt2 and rbx1.

Its subcellular location is the nucleus. The protein localises to the cytoplasm. It localises to the cytoskeleton. The protein resides in the microtubule organizing center. It is found in the centrosome. Its subcellular location is the chromosome. It participates in protein modification; protein ubiquitination. Functionally, substrate-specific adapter of a DCX (DDB1-CUL4-X-box) E3 ubiquitin-protein ligase complex required for cell cycle control, DNA damage response and translesion DNA synthesis. The DCX(DTL) complex, also named CRL4(CDT2) complex, mediates the polyubiquitination and subsequent degradation of CDT1, CDKN1A/p21(CIP1), KMT5A and SDE2. CDT1 degradation in response to DNA damage is necessary to ensure proper cell cycle regulation of DNA replication. CDKN1A/p21(CIP1) degradation during S phase or following UV irradiation is essential to control replication licensing. KMT5A degradation is also important for a proper regulation of mechanisms such as TGF-beta signaling, cell cycle progression, DNA repair and cell migration. Most substrates require their interaction with PCNA for their polyubiquitination: substrates interact with PCNA via their PIP-box, and those containing the 'K+4' motif in the PIP box, recruit the DCX(DTL) complex, leading to their degradation. In undamaged proliferating cells, the DCX(DTL) complex also promotes the 'Lys-164' monoubiquitination of PCNA, thereby being involved in PCNA-dependent translesion DNA synthesis. May play a role in the regulation of the circadian clock. This chain is Denticleless protein homolog (dtl), found in Xenopus tropicalis (Western clawed frog).